A 126-amino-acid chain; its full sequence is uncharacterized protein (126 aa).

Composition is skewed to basic residues over residues 21–31 and 41–83; these read RKKRKKRKKRR and RILK…RKRR. Residues 21–83 are disordered; that stretch reads RKKRKKRKKR…RSPRKRRKRR (63 aa).

This is an uncharacterized protein from Saccharomyces cerevisiae (strain ATCC 204508 / S288c) (Baker's yeast).